Reading from the N-terminus, the 69-residue chain is Large ribosomal subunit protein bL31 (69 aa).

Zn(2+) contacts are provided by Cys16, Cys18, Cys36, and Cys39.

This sequence belongs to the bacterial ribosomal protein bL31 family. Type A subfamily. Part of the 50S ribosomal subunit. Zn(2+) is required as a cofactor.

In terms of biological role, binds the 23S rRNA. This chain is Large ribosomal subunit protein bL31, found in Ruminiclostridium cellulolyticum (strain ATCC 35319 / DSM 5812 / JCM 6584 / H10) (Clostridium cellulolyticum).